A 414-amino-acid chain; its full sequence is Serine hydroxymethyltransferase (414 aa).

(6S)-5,6,7,8-tetrahydrofolate is bound by residues Leu-121 and 125-127 (GHL). At Lys-229 the chain carries N6-(pyridoxal phosphate)lysine.

Belongs to the SHMT family. As to quaternary structure, homodimer. Requires pyridoxal 5'-phosphate as cofactor.

The protein resides in the cytoplasm. The catalysed reaction is (6R)-5,10-methylene-5,6,7,8-tetrahydrofolate + glycine + H2O = (6S)-5,6,7,8-tetrahydrofolate + L-serine. Its pathway is one-carbon metabolism; tetrahydrofolate interconversion. It functions in the pathway amino-acid biosynthesis; glycine biosynthesis; glycine from L-serine: step 1/1. In terms of biological role, catalyzes the reversible interconversion of serine and glycine with tetrahydrofolate (THF) serving as the one-carbon carrier. This reaction serves as the major source of one-carbon groups required for the biosynthesis of purines, thymidylate, methionine, and other important biomolecules. Also exhibits THF-independent aldolase activity toward beta-hydroxyamino acids, producing glycine and aldehydes, via a retro-aldol mechanism. This Albidiferax ferrireducens (strain ATCC BAA-621 / DSM 15236 / T118) (Rhodoferax ferrireducens) protein is Serine hydroxymethyltransferase.